Reading from the N-terminus, the 563-residue chain is Delta-1-pyrroline-5-carboxylate dehydrogenase, mitochondrial (563 aa).

Residues 1–24 constitute a mitochondrion transit peptide; that stretch reads MLLPAPALRRALLSRPWTGAGLRW. An N6-succinyllysine modification is found at K31. S44 carries the post-translational modification Phosphoserine. K52 bears the N6-acetyllysine mark. Residues K93, K99, K114, K130, and K175 each carry the N6-acetyllysine; alternate modification. Residues K93, K99, K114, K130, and K175 each carry the N6-succinyllysine; alternate modification. Residues S208, K233, and 286–290 contribute to the NAD(+) site; that span reads GSVPT. Catalysis depends on E314, which acts as the Proton acceptor. At K318 the chain carries N6-acetyllysine. Position 347 is an N6-succinyllysine (K347). The Nucleophile role is filled by C348. 2 positions are modified to N6-acetyllysine: K365 and K376. Residue K395 is modified to N6-succinyllysine. NAD(+) is bound at residue E447. K462 is subject to N6-acetyllysine. Position 509 is an N6-acetyllysine; alternate (K509). K509 carries the post-translational modification N6-succinyllysine; alternate. Position 513 (S513) interacts with substrate. Residues K531 and K552 each carry the N6-acetyllysine modification.

It belongs to the aldehyde dehydrogenase family. As to quaternary structure, homodimer. Highest expression is found in liver followed by skeletal muscle, kidney, heart, brain, placenta, lung and pancreas.

It localises to the mitochondrion matrix. It carries out the reaction L-glutamate 5-semialdehyde + NAD(+) + H2O = L-glutamate + NADH + 2 H(+). It participates in amino-acid degradation; L-proline degradation into L-glutamate; L-glutamate from L-proline: step 2/2. Its function is as follows. Irreversible conversion of delta-1-pyrroline-5-carboxylate (P5C), derived either from proline or ornithine, to glutamate. This is a necessary step in the pathway interconnecting the urea and tricarboxylic acid cycles. The preferred substrate is glutamic gamma-semialdehyde, other substrates include succinic, glutaric and adipic semialdehydes. This chain is Delta-1-pyrroline-5-carboxylate dehydrogenase, mitochondrial (ALDH4A1), found in Homo sapiens (Human).